The primary structure comprises 292 residues: MSLVSAALFGLLQALTEFLPVSSTAHLLVFGELLGHSLDDRRFRAFVTIIQAGTTLAVLVYFRADIARLVAASARGLARGRPFGTPEARLGWYIVLGTLPAALAGKLLEHRIEALGNWVIAGSLVALGLVLLAAERLASHRRRVEDVGAGDALLIGVAQALALVPGSSRSGTTITGGMLLGFTREAAARFSFLLSVPITLAAGAYKLWSTVPDLRGEAAWTVATVVGTVVSAVAGYLVIDWLLAWLRTRTTYVFVVWRLAAGAAIAALILSGVLPAGAEAPPPPPPALHAAP.

7 helical membrane-spanning segments follow: residues 1 to 21 (MSLV…FLPV), 46 to 66 (FVTI…RADI), 90 to 110 (LGWY…LLEH), 114 to 134 (ALGN…LLAA), 192 to 212 (FLLS…STVP), 225 to 245 (VVGT…LLAW), and 253 to 273 (VFVV…LSGV).

The protein belongs to the UppP family.

The protein resides in the cell inner membrane. The catalysed reaction is di-trans,octa-cis-undecaprenyl diphosphate + H2O = di-trans,octa-cis-undecaprenyl phosphate + phosphate + H(+). Catalyzes the dephosphorylation of undecaprenyl diphosphate (UPP). Confers resistance to bacitracin. The polypeptide is Undecaprenyl-diphosphatase (Anaeromyxobacter sp. (strain K)).